Here is a 481-residue protein sequence, read N- to C-terminus: Glutamyl-tRNA(Gln) amidotransferase subunit A (481 aa).

Catalysis depends on charge relay system residues Lys76 and Ser151. The Acyl-ester intermediate role is filled by Ser175.

It belongs to the amidase family. GatA subfamily. Heterotrimer of A, B and C subunits.

The catalysed reaction is L-glutamyl-tRNA(Gln) + L-glutamine + ATP + H2O = L-glutaminyl-tRNA(Gln) + L-glutamate + ADP + phosphate + H(+). Its function is as follows. Allows the formation of correctly charged Gln-tRNA(Gln) through the transamidation of misacylated Glu-tRNA(Gln) in organisms which lack glutaminyl-tRNA synthetase. The reaction takes place in the presence of glutamine and ATP through an activated gamma-phospho-Glu-tRNA(Gln). In Chlorobaculum parvum (strain DSM 263 / NCIMB 8327) (Chlorobium vibrioforme subsp. thiosulfatophilum), this protein is Glutamyl-tRNA(Gln) amidotransferase subunit A.